The following is a 577-amino-acid chain: 2-succinyl-5-enolpyruvyl-6-hydroxy-3-cyclohexene-1-carboxylate synthase (577 aa).

Belongs to the TPP enzyme family. MenD subfamily. Homodimer. Mg(2+) is required as a cofactor. It depends on Mn(2+) as a cofactor. Thiamine diphosphate serves as cofactor.

It catalyses the reaction isochorismate + 2-oxoglutarate + H(+) = 5-enolpyruvoyl-6-hydroxy-2-succinyl-cyclohex-3-ene-1-carboxylate + CO2. It participates in quinol/quinone metabolism; 1,4-dihydroxy-2-naphthoate biosynthesis; 1,4-dihydroxy-2-naphthoate from chorismate: step 2/7. The protein operates within quinol/quinone metabolism; menaquinone biosynthesis. Functionally, catalyzes the thiamine diphosphate-dependent decarboxylation of 2-oxoglutarate and the subsequent addition of the resulting succinic semialdehyde-thiamine pyrophosphate anion to isochorismate to yield 2-succinyl-5-enolpyruvyl-6-hydroxy-3-cyclohexene-1-carboxylate (SEPHCHC). The chain is 2-succinyl-5-enolpyruvyl-6-hydroxy-3-cyclohexene-1-carboxylate synthase from Christiangramia forsetii (strain DSM 17595 / CGMCC 1.15422 / KT0803) (Gramella forsetii).